The sequence spans 318 residues: MNELNLTVSSSPHIRAKHSTASIMQNVIIALLPALAVAGYVFGLWALALVAICVISSVATEAVIQKLLKKPITVNDWSAVVTGVLLAFNLPINAPWWIGVVGSVFAIAIVKQCFGGLGQNFINPALAARAFLLASWPGHMTSTAYIPLTDTVTTATPLALLKAGETGSMPSTLDLFTGLNGVYGCIGEISALALLIGGLYLIYKGIISWRIPTIYLLTIAIFALLVGQDPIVHMVSGGVMLGAFFMATDYASSPVTAKGQIIYAIGCGLITMIIRLYGGYPEGCSYSILLMNVATPLIERFTKERIYGVTKIKKEAKA.

The next 3 membrane-spanning stretches (helical) occupy residues 35-55 (LAVA…ICVI), 77-99 (WSAV…WWIG), and 114-134 (FGGL…FLLA). An FMN phosphoryl threonine modification is found at threonine 156. 3 consecutive transmembrane segments (helical) span residues 182–202 (VYGC…LYLI), 206–226 (IISW…ALLV), and 261–281 (IIYA…GGYP).

Belongs to the NqrB/RnfD family. The complex is composed of six subunits: RnfA, RnfB, RnfC, RnfD, RnfE and RnfG. FMN is required as a cofactor.

It is found in the cell membrane. It catalyses the reaction 2 reduced [2Fe-2S]-[ferredoxin] + Na(+)(in) + NAD(+) + H(+) = 2 oxidized [2Fe-2S]-[ferredoxin] + Na(+)(out) + NADH. Its function is as follows. Part of a membrane-bound complex that couples electron transfer with translocation of ions across the membrane. Couples electron transfer from reduced ferredoxin to NAD(+) with electrogenic movement of Na(+) out of the cell. Involved in caffeate respiration. The chain is Na(+)-translocating ferredoxin:NAD(+) oxidoreductase complex subunit D from Acetobacterium woodii (strain ATCC 29683 / DSM 1030 / JCM 2381 / KCTC 1655 / WB1).